A 160-amino-acid polypeptide reads, in one-letter code: Eukaryotic translation initiation factor 5A (160 aa).

The segment covering 1 to 12 (MSDEEHHFESKA) has biased composition (basic and acidic residues). Residues 1-21 (MSDEEHHFESKADAGASKTFP) are disordered. Lys52 carries the post-translational modification Hypusine.

Belongs to the eIF-5A family. Post-translationally, lys-53 undergoes hypusination, a unique post-translational modification that consists in the addition of a butylamino group from spermidine to lysine side chain, leading to the formation of the unusual amino acid hypusine. eIF-5As are the only known proteins to undergo this modification, which is essential for their function.

In terms of biological role, translation factor that promotes translation elongation and termination, particularly upon ribosome stalling at specific amino acid sequence contexts. Binds between the exit (E) and peptidyl (P) site of the ribosome and promotes rescue of stalled ribosome: specifically required for efficient translation of polyproline-containing peptides as well as other motifs that stall the ribosome. Acts as a ribosome quality control (RQC) cofactor by joining the RQC complex to facilitate peptidyl transfer during CAT tailing step. This chain is Eukaryotic translation initiation factor 5A, found in Manihot esculenta (Cassava).